We begin with the raw amino-acid sequence, 187 residues long: Large ribosomal subunit protein uL6 (187 aa).

It belongs to the universal ribosomal protein uL6 family. Part of the 50S ribosomal subunit.

Its function is as follows. This protein binds to the 23S rRNA, and is important in its secondary structure. It is located near the subunit interface in the base of the L7/L12 stalk, and near the tRNA binding site of the peptidyltransferase center. The polypeptide is Large ribosomal subunit protein uL6 (Roseiflexus sp. (strain RS-1)).